A 485-amino-acid polypeptide reads, in one-letter code: Zinc finger protein 639 (485 aa).

Positions 1–14 are enriched in basic residues; sequence MSEYPKKRKRKTLH. 2 disordered regions span residues 1-23 and 54-82; these read MSEY…DSSG and DNKD…SRSQ. Ser-60 is modified (phosphoserine). Residue Lys-76 forms a Glycyl lysine isopeptide (Lys-Gly) (interchain with G-Cter in SUMO2) linkage. At Ser-88 the chain carries Phosphoserine. Glycyl lysine isopeptide (Lys-Gly) (interchain with G-Cter in SUMO2) cross-links involve residues Lys-177, Lys-181, and Lys-226. C2H2-type zinc fingers lie at residues 204-227, 233-255, 260-283, 289-311, 374-397, 403-425, 431-454, and 460-482; these read YKCE…ILKH, NVCR…AKLH, YICK…ADTH, YWCE…FQEH, FVCQ…AIEH, HVCD…LNSH, YLCQ…DFKH, and HKCS…LPVH. Positions 371 to 455 are interaction with CTNNA2; it reads KNFFVCQVCG…LKIHLDFKHS (85 aa).

It belongs to the krueppel C2H2-type zinc-finger protein family. Interacts with CTNNA2.

The protein localises to the nucleus. In terms of biological role, binds DNA and may function as a transcriptional repressor. The sequence is that of Zinc finger protein 639 (Znf639) from Rattus norvegicus (Rat).